The sequence spans 157 residues: Baculoviral IAP repeat-containing protein 5.2-A (157 aa).

The stretch at 31–101 (RLRTFSNWPF…KHSPSCLFIA (71 aa)) is one BIR repeat. T47 is modified (phosphothreonine; by CDK1). Zn(2+) contacts are provided by C70, C73, H90, and C97.

The protein belongs to the IAP family. In terms of assembly, component of the CPC at least composed of survivin/birc5, incenp, cdca8/borealin and/or cdca9/dasra-A, and aurkb/aurora-B. Interacts directly with incenp (via N-terminus). Interacts with rxra; the interaction is stronger in the absence of 9-cis retinoic acids. Post-translationally, ubiquitination is required for centrosome-targeting. In terms of tissue distribution, highly expressed in vascular endothelial cells of tadpoles.

It localises to the cytoplasm. The protein localises to the nucleus. Its subcellular location is the chromosome. The protein resides in the centromere. It is found in the cytoskeleton. It localises to the spindle. Functionally, component of the chromosomal passenger complex (CPC), a complex that acts as a key regulator of mitosis. The CPC complex has essential functions at the centromere in ensuring correct chromosome alignment and segregation and is required for chromatin-induced microtubule stabilization and spindle assembly. Does not appear to exhibit anti-apoptotic activity. Plays a role in increasing blood vessel size during development. The chain is Baculoviral IAP repeat-containing protein 5.2-A (birc5.2-a) from Xenopus laevis (African clawed frog).